The primary structure comprises 852 residues: Taste receptor type 1 member 3 (852 aa).

Residues 1–20 (MLGPAVLGLSLWALLHPGTG) form the signal peptide. The Extracellular portion of the chain corresponds to 21–570 (APLCLSQQLR…FLAWGEPAVL (550 aa)). 8 N-linked (GlcNAc...) asparagine glycosylation sites follow: asparagine 85, asparagine 130, asparagine 264, asparagine 285, asparagine 380, asparagine 411, asparagine 432, and asparagine 475. Positions 536-545 (IACTFCGQDE) are required for brazzein responsiveness. The chain crosses the membrane as a helical span at residues 571–591 (LLLLLLSLALGLVLAALGLFV). Residues 592 to 603 (HHRDSPLVQASG) lie on the Cytoplasmic side of the membrane. A helical membrane pass occupies residues 604–624 (GPLACFGLVCLGLVCLSVLLF). Over 625 to 639 (PGQPSPARCLAQQPL) the chain is Extracellular. Residues 640–660 (SHLPLTGCLSTLFLQAAEIFV) traverse the membrane as a helical segment. Residues 661-682 (ESELPLSWADRLSGCLRGPWAW) lie on the Cytoplasmic side of the membrane. The chain crosses the membrane as a helical span at residues 683–703 (LVVLLAMLVEVALCTWYLVAF). At 704–729 (PPEVVTDWHMLPTEALVHCRTRSWVS) the chain is on the extracellular side. The helical transmembrane segment at 730–750 (FGLAHATNATLAFLCFLGTFL) threads the bilayer. The Cytoplasmic portion of the chain corresponds to 751–762 (VRSQPGCYNRAR). Residues 763–783 (GLTFAMLAYFITWVSFVPLLA) form a helical membrane-spanning segment. The Extracellular portion of the chain corresponds to 784-789 (NVQVVL). The chain crosses the membrane as a helical span at residues 790–810 (RPAVQMGALLLCVLGILAAFH). Over 811-852 (LPRCYLLMRQPGLNTPEFFLGGGPGDAQGQNDGNTGNQGKHE) the chain is Cytoplasmic.

The protein belongs to the G-protein coupled receptor 3 family. TAS1R subfamily. In terms of assembly, forms homodimers or heterodimers with TAS1R1 and TAS1R2.

It localises to the cell membrane. Functionally, putative taste receptor. TAS1R1/TAS1R3 responds to the umami taste stimulus (the taste of monosodium glutamate). TAS1R2/TAS1R3 recognizes diverse natural and synthetic sweeteners. TAS1R3 is essential for the recognition and response to the disaccharide trehalose. Sequence differences within and between species can significantly influence the selectivity and specificity of taste responses. The chain is Taste receptor type 1 member 3 (TAS1R3) from Homo sapiens (Human).